Reading from the N-terminus, the 728-residue chain is Catalase-peroxidase 1 (728 aa).

Residues W91–Y218 constitute a cross-link (tryptophyl-tyrosyl-methioninium (Trp-Tyr) (with M-244)). H92 (proton acceptor) is an active-site residue. The segment at residues Y218–M244 is a cross-link (tryptophyl-tyrosyl-methioninium (Tyr-Met) (with W-91)). H259 provides a ligand contact to heme b.

It belongs to the peroxidase family. Peroxidase/catalase subfamily. In terms of assembly, homodimer or homotetramer. Heme b serves as cofactor. In terms of processing, formation of the three residue Trp-Tyr-Met cross-link is important for the catalase, but not the peroxidase activity of the enzyme.

It catalyses the reaction H2O2 + AH2 = A + 2 H2O. It carries out the reaction 2 H2O2 = O2 + 2 H2O. Functionally, bifunctional enzyme with both catalase and broad-spectrum peroxidase activity. The chain is Catalase-peroxidase 1 from Burkholderia orbicola (strain MC0-3).